The following is a 314-amino-acid chain: Glutathione synthetase (314 aa).

Positions 125-311 constitute an ATP-grasp domain; that stretch reads EKLAAQLFPQ…IAGQLFDAIE (187 aa). 151 to 208 serves as a coordination point for ATP; it reads FVQKQEQAILKPLDGMGGHSIFRSSNGDPNLNVILETLTDGGRTLAIAQRYLQQIIEG. The Mg(2+) site is built by glutamate 282 and asparagine 284.

This sequence belongs to the prokaryotic GSH synthase family. Mg(2+) serves as cofactor. Requires Mn(2+) as cofactor.

The catalysed reaction is gamma-L-glutamyl-L-cysteine + glycine + ATP = glutathione + ADP + phosphate + H(+). Its pathway is sulfur metabolism; glutathione biosynthesis; glutathione from L-cysteine and L-glutamate: step 2/2. This is Glutathione synthetase from Xylella fastidiosa (strain 9a5c).